A 279-amino-acid polypeptide reads, in one-letter code: Acetyl-coenzyme A carboxylase carboxyl transferase subunit beta (279 aa).

Residues 27 to 279 (LFLACPYCGT…IVKLHHRTEI (253 aa)) enclose the CoA carboxyltransferase N-terminal domain. 4 residues coordinate Zn(2+): Cys-31, Cys-34, Cys-49, and Cys-52. The C4-type zinc-finger motif lies at 31–52 (CPYCGTQMYNKQLGDYRVCAKC).

This sequence belongs to the AccD/PCCB family. Acetyl-CoA carboxylase is a heterohexamer composed of biotin carboxyl carrier protein (AccB), biotin carboxylase (AccC) and two subunits each of ACCase subunit alpha (AccA) and ACCase subunit beta (AccD). Requires Zn(2+) as cofactor.

The protein resides in the cytoplasm. The enzyme catalyses N(6)-carboxybiotinyl-L-lysyl-[protein] + acetyl-CoA = N(6)-biotinyl-L-lysyl-[protein] + malonyl-CoA. It participates in lipid metabolism; malonyl-CoA biosynthesis; malonyl-CoA from acetyl-CoA: step 1/1. Component of the acetyl coenzyme A carboxylase (ACC) complex. Biotin carboxylase (BC) catalyzes the carboxylation of biotin on its carrier protein (BCCP) and then the CO(2) group is transferred by the transcarboxylase to acetyl-CoA to form malonyl-CoA. The polypeptide is Acetyl-coenzyme A carboxylase carboxyl transferase subunit beta (Leuconostoc citreum (strain KM20)).